The following is a 108-amino-acid chain: uncharacterized protein (108 aa).

The span at Met-1 to Asp-10 shows a compositional bias: basic and acidic residues. Positions Met-1–Gln-27 are disordered. The span at Ile-12 to Asn-22 shows a compositional bias: polar residues.

This is an uncharacterized protein from Saccharomyces cerevisiae (strain ATCC 204508 / S288c) (Baker's yeast).